The sequence spans 686 residues: AsmA family protein YhjG (686 aa).

Over 1–6 (MSKAGK) the chain is Cytoplasmic. Residues 7–27 (ITAAISGAFLLLIVVAIILIA) traverse the membrane as a helical segment. The Periplasmic portion of the chain corresponds to 28–686 (TFDWNRLKPT…CRTILSQMKK (659 aa)). A disordered region spans residues 372–396 (VDSGKGAEKSKRSEQKKGEKSVQPA). Positions 376–391 (KGAEKSKRSEQKKGEK) are enriched in basic and acidic residues.

It belongs to the AsmA family.

The protein localises to the cell inner membrane. The sequence is that of AsmA family protein YhjG (yhjG) from Escherichia coli (strain K12).